We begin with the raw amino-acid sequence, 259 residues long: MEPPGEKPGEAEALSITPQLLKSHSGEFALDSILLLKLRGLGVVDLGCLGECLNLEWLDLSGNALTHLGPLASLRQLAVLNVSNNRLTGLEPLAACENLQSLNAAGNLLTTPGQLQCLAGLQALEHLRLRDPLARLSNPLCANASYWAVVRELLPGLKVIDGERVSGRGSELYQLCRDLDSSLRSGSSPGPRAIEAQPWVEPGYWESWPIRSSSILEEACRQFQDTLQECLDLDRQASDSLAQAQQALSPAETTSSFVF.

LRR repeat units lie at residues 54 to 75 (NLEW…ASLR), 76 to 97 (QLAV…AACE), and 98 to 119 (NLQS…QCLA). One can recognise an LRRCT domain in the interval 138 to 178 (NPLCANASYWAVVRELLPGLKVIDGERVSGRGSELYQLCRD).

The polypeptide is Leucine-rich repeat-containing protein 61 (Lrrc61) (Mus musculus (Mouse)).